The sequence spans 386 residues: MSSVEVVAQQLLAAEHPRRMGKGAAADPRRAALGELTNLNAVAATNGKVGPSKKPSKASCAQKPKPTELVAPMIQTGAAASAPVSAKPCVKEEQLCQAFSEVLLAVQDVDEQDADQPQLCSQYVKDIYKYLHVLEEQQPVRANYMQGYEVTERMRALLVDWLVQVHSRFQLLQETLYLTVAILDRFLQVHPVSRRKLQLVGVTAMLVACKYEEMYTPEVADFSYITDNAFTKSQIVEMEQVILRSLSFQLGRPLPLHFLRRATKVAGADVEKHTLAKYLMELTLLDYHMVHYRPSEVAAAALCLSQLLLDGLPWSLTQQQYSTYEEQHLKPIMRHIAKNVVLVNEGRTKFLAVKKKYSSSKLMKISLIPQLNSSTVKAMAESLHNP.

A disordered region spans residues Thr45–Pro64.

The protein belongs to the cyclin family. Cyclin AB subfamily. Interacts with the CDK1 protein kinase to form a serine/threonine kinase holoenzyme complex also known as maturation promoting factor (MPF). The cyclin subunit imparts substrate specificity to the complex.

Functionally, essential for the control of the cell cycle at the G2/M (mitosis) transition. The chain is G2/mitotic-specific cyclin-B2 (ccnb2) from Oryzias luzonensis (Luzon ricefish).